A 316-amino-acid polypeptide reads, in one-letter code: L-lactate dehydrogenase 3 (316 aa).

NAD(+)-binding residues include Val16, Asp37, Arg42, and Tyr68. Arg91 serves as a coordination point for substrate. NAD(+) contacts are provided by residues Ser104, 121–123 (ASN), and Thr146. 123 to 126 (NPVD) provides a ligand contact to substrate. 151-154 (DSSR) contributes to the substrate binding site. 2 residues coordinate beta-D-fructose 1,6-bisphosphate: Arg156 and His171. His178 functions as the Proton acceptor in the catalytic mechanism. Substrate is bound at residue Thr233.

It belongs to the LDH/MDH superfamily. LDH family. As to quaternary structure, homotetramer.

Its subcellular location is the cytoplasm. It carries out the reaction (S)-lactate + NAD(+) = pyruvate + NADH + H(+). The protein operates within fermentation; pyruvate fermentation to lactate; (S)-lactate from pyruvate: step 1/1. With respect to regulation, allosterically activated by fructose 1,6-bisphosphate (FBP). Catalyzes the conversion of lactate to pyruvate. The protein is L-lactate dehydrogenase 3 of Bacillus cereus (strain ATCC 10987 / NRS 248).